Reading from the N-terminus, the 499-residue chain is Acetylcholine receptor subunit alpha-type acr-16 (499 aa).

The signal sequence occupies residues 1–19 (MSSVCALLLSCALFLVAHG). Topologically, residues 20 to 232 (SLQERRLYED…LHMRRRTLYY (213 aa)) are extracellular. 2 N-linked (GlcNAc...) asparagine glycosylation sites follow: asparagine 43 and asparagine 93. 2 cysteine pairs are disulfide-bonded: cysteine 147–cysteine 161 and cysteine 211–cysteine 212. A run of 3 helical transmembrane segments spans residues 233–253 (GFNL…GFTL), 261–281 (ITLQ…VSEM), and 289–309 (VPLL…STVF). The Cytoplasmic segment spans residues 310–473 (TVYVLNLHYR…WKFAAMVVDR (164 aa)). The helical transmembrane segment at 474-494 (LCLYVFTIFIIASTIGIFWSA) threads the bilayer. Residues 495–499 (PYLVA) lie on the Extracellular side of the membrane.

The protein belongs to the ligand-gated ion channel (TC 1.A.9) family. Acetylcholine receptor (TC 1.A.9.1) subfamily.

It localises to the postsynaptic cell membrane. The protein localises to the cell membrane. Functionally, after binding acetylcholine, the AChR responds by an extensive change in conformation that affects all subunits and leads to opening of an ion-conducting channel across the plasma membrane. A subunit of the levamisole-insensitive nicotinic receptor. The polypeptide is Acetylcholine receptor subunit alpha-type acr-16 (Caenorhabditis briggsae).